The following is a 464-amino-acid chain: Soluble pyridine nucleotide transhydrogenase (464 aa).

Residue 35-44 (DNRPLVGGNC) coordinates FAD.

The protein belongs to the class-I pyridine nucleotide-disulfide oxidoreductase family. The cofactor is FAD.

The protein localises to the cytoplasm. The enzyme catalyses NAD(+) + NADPH = NADH + NADP(+). Its function is as follows. Conversion of NADPH, generated by peripheral catabolic pathways, to NADH, which can enter the respiratory chain for energy generation. This is Soluble pyridine nucleotide transhydrogenase from Ectopseudomonas mendocina (strain ymp) (Pseudomonas mendocina).